Consider the following 299-residue polypeptide: Small ribosomal subunit protein uS2 (299 aa).

Residues 210 to 299 are disordered; it reads AEKEEQTQVV…GAATDNSWAS (90 aa). The span at 275 to 285 shows a compositional bias: polar residues; that stretch reads WASTGTATVGP.

It belongs to the universal ribosomal protein uS2 family. In terms of assembly, component of the small ribosomal subunit. Mature ribosomes consist of a small (40S) and a large (60S) subunit. The 40S subunit contains about 33 different proteins and 1 molecule of RNA (18S). The 60S subunit contains about 49 different proteins and 3 molecules of RNA (28S, 5.8S and 5S). Interacts with ribosomal protein S21.

Its subcellular location is the cytoplasm. Its function is as follows. Required for the assembly and/or stability of the 40S ribosomal subunit. Required for the processing of the 20S rRNA-precursor to mature 18S rRNA in a late step of the maturation of 40S ribosomal subunits. In Ornithodoros parkeri (Soft tick), this protein is Small ribosomal subunit protein uS2.